A 768-amino-acid chain; its full sequence is Actin filament-associated protein 1-like 1 (768 aa).

Residues 83 to 145 (LRDMSDDGEP…GKSPEYISSH (63 aa)) are disordered. Residues serine 87, serine 93, serine 97, serine 103, and serine 153 each carry the phosphoserine modification. The segment covering 165–185 (SYPTTRMNGELKNSYNDSDAM) has biased composition (polar residues). The tract at residues 165–211 (SYPTTRMNGELKNSYNDSDAMSSSYESYDEEEEEEKGRQPKHQWPSE) is disordered. The PH 1 domain occupies 220-316 (DCRICAFLLR…WLKVIREVSR (97 aa)). Phosphoserine occurs at positions 329 and 343. A compositionally biased stretch (basic and acidic residues) spans 340–349 (KRLSQEKQNS). A disordered region spans residues 340-382 (KRLSQEKQNSDSDSLGMNDSGSTLGRREACEHGKGKKNSLAEL). Polar residues predominate over residues 350 to 362 (DSDSLGMNDSGST). The PH 2 domain occupies 418-512 (EVPCCGYLNV…WLGLLLVEMG (95 aa)). Tyrosine 557 is modified (phosphotyrosine). Residues 564-609 (KVQDEEPQRPTGAQVKRHASSCSEKSHRADPQVKVKRHASSANQYK) are disordered. Residues 587 to 596 (EKSHRADPQV) show a composition bias toward basic and acidic residues. Residues 611–701 (GKNRAEEDAR…AVKERLQQSL (91 aa)) are a coiled coil. A disordered region spans residues 705 to 768 (PALGLSVSNK…KAKEWEMKKT (64 aa)). Residues 710-734 (SVSNKNKSQDTTNKPQSNAPEQSLP) show a composition bias toward polar residues. Phosphoserine is present on serine 747. The segment covering 759–768 (KAKEWEMKKT) has biased composition (basic and acidic residues).

As to quaternary structure, interacts with CTTN.

The protein resides in the cytoplasm. It is found in the cell projection. Its subcellular location is the podosome. It localises to the invadopodium. The protein localises to the cytoskeleton. The protein resides in the stress fiber. May be involved in podosome and invadosome formation. In Mus musculus (Mouse), this protein is Actin filament-associated protein 1-like 1 (Afap1l1).